We begin with the raw amino-acid sequence, 205 residues long: Recombination protein RecR (205 aa).

The segment at 64–79 adopts a C4-type zinc-finger fold; the sequence is CSRCYFITQNDLCAIC. One can recognise a Toprim domain in the interval 87–182; the sequence is RIVCVVEEPL…RVTRLARGLP (96 aa).

It belongs to the RecR family.

Functionally, may play a role in DNA repair. It seems to be involved in an RecBC-independent recombinational process of DNA repair. It may act with RecF and RecO. The protein is Recombination protein RecR of Roseiflexus castenholzii (strain DSM 13941 / HLO8).